A 344-amino-acid polypeptide reads, in one-letter code: Selenide, water dikinase (344 aa).

The active site involves Cys16. ATP is bound by residues Lys19 and 47–49 (SRD). Asp50 lines the Mg(2+) pocket. ATP-binding positions include Asp67, Asp90, and 138 to 140 (GHS). Mg(2+) is bound at residue Asp90. Residue Asp226 coordinates Mg(2+).

It belongs to the selenophosphate synthase 1 family. Class I subfamily. In terms of assembly, homodimer. Requires Mg(2+) as cofactor.

It catalyses the reaction hydrogenselenide + ATP + H2O = selenophosphate + AMP + phosphate + 2 H(+). Synthesizes selenophosphate from selenide and ATP. In Pseudomonas aeruginosa (strain ATCC 15692 / DSM 22644 / CIP 104116 / JCM 14847 / LMG 12228 / 1C / PRS 101 / PAO1), this protein is Selenide, water dikinase.